The primary structure comprises 139 residues: Peptide methionine sulfoxide reductase MsrB (139 aa).

One can recognise a MsrB domain in the interval 8 to 130 (DREWQRELSP…NSASLQLKTQ (123 aa)). Zn(2+) is bound by residues Cys-47, Cys-50, Cys-96, and Cys-99. Residue Cys-119 is the Nucleophile of the active site.

Belongs to the MsrB Met sulfoxide reductase family. Zn(2+) serves as cofactor.

It carries out the reaction L-methionyl-[protein] + [thioredoxin]-disulfide + H2O = L-methionyl-(R)-S-oxide-[protein] + [thioredoxin]-dithiol. The protein is Peptide methionine sulfoxide reductase MsrB of Acinetobacter baumannii (strain AB307-0294).